The chain runs to 232 residues: Probable transcriptional regulatory protein Bd1964 (232 aa).

It belongs to the TACO1 family.

It is found in the cytoplasm. In Bdellovibrio bacteriovorus (strain ATCC 15356 / DSM 50701 / NCIMB 9529 / HD100), this protein is Probable transcriptional regulatory protein Bd1964.